Consider the following 394-residue polypeptide: LL-diaminopimelate aminotransferase (394 aa).

Positions 14 and 41 each coordinate substrate. Pyridoxal 5'-phosphate-binding positions include Tyr-71, 104–105, Tyr-128, Asn-174, Tyr-205, and 233–235; these read AK and SFS. 3 residues coordinate substrate: Lys-105, Tyr-128, and Asn-174. N6-(pyridoxal phosphate)lysine is present on Lys-236. Residues Arg-244 and Asn-275 each contribute to the pyridoxal 5'-phosphate site. Residues Asn-275 and Arg-369 each contribute to the substrate site.

It belongs to the class-I pyridoxal-phosphate-dependent aminotransferase family. LL-diaminopimelate aminotransferase subfamily. Homodimer. Requires pyridoxal 5'-phosphate as cofactor.

It carries out the reaction (2S,6S)-2,6-diaminopimelate + 2-oxoglutarate = (S)-2,3,4,5-tetrahydrodipicolinate + L-glutamate + H2O + H(+). Its pathway is amino-acid biosynthesis; L-lysine biosynthesis via DAP pathway; LL-2,6-diaminopimelate from (S)-tetrahydrodipicolinate (aminotransferase route): step 1/1. Its function is as follows. Involved in the synthesis of meso-diaminopimelate (m-DAP or DL-DAP), required for both lysine and peptidoglycan biosynthesis. Catalyzes the direct conversion of tetrahydrodipicolinate to LL-diaminopimelate. Is also able to use meso-diaminopimelate, cystathionine, lysine or ornithine as substrates. This Chlamydia trachomatis serovar D (strain ATCC VR-885 / DSM 19411 / UW-3/Cx) protein is LL-diaminopimelate aminotransferase.